A 202-amino-acid polypeptide reads, in one-letter code: Protein cuti-1 (202 aa).

Residues 1-37 lie on the Cytoplasmic side of the membrane; it reads MPNDRVAPLPPNFVYSPHDKFYYAPATCNSMHYTTAS. Residues 38–58 form a helical membrane-spanning segment; that stretch reads YISAFIEFLVMGTGAICFYVM. The Extracellular portion of the chain corresponds to 59–68; sequence SHKSDSIGKW. A helical transmembrane segment spans residues 69-89; it reads LFYIQAGITVLSLLTSALMAF. The Cytoplasmic segment spans residues 90–107; sequence GLWKENPQMLGSKLKFIE. Residues 108–128 traverse the membrane as a helical segment; that stretch reads FIICFLLIWAVISIVCMAFGI. Residues 129–148 are Extracellular-facing; sequence QFTRQVFGIFGKVHRIEQDY. A helical transmembrane segment spans residues 149–169; the sequence is GPIWPFNIAVVSFFTAAIAIW. The Cytoplasmic portion of the chain corresponds to 170–202; the sequence is TRIIIQGAADYLYDKAYFADKQNVELRESSKTR.

In terms of assembly, interacts with vps-39.

The protein localises to the cell membrane. It is found in the cytoplasm. Functionally, involved in cuticle formation and ensures cuticle shedding during larval development. Plays a role in maintaining the hypodermis. In association with vps-39, may play a role in vesicle tethering. The sequence is that of Protein cuti-1 from Caenorhabditis elegans.